Reading from the N-terminus, the 200-residue chain is Recombination protein RecR (200 aa).

The segment at 58–75 (CPLCFTLKESKEADCHFC) adopts a C4-type zinc-finger fold. Positions 82–177 (QSLCIVASPK…NISRLALGLP (96 aa)) constitute a Toprim domain.

It belongs to the RecR family.

May play a role in DNA repair. It seems to be involved in an RecBC-independent recombinational process of DNA repair. It may act with RecF and RecO. The chain is Recombination protein RecR from Chlamydia pneumoniae (Chlamydophila pneumoniae).